A 434-amino-acid polypeptide reads, in one-letter code: Methylenetetrahydrofolate--tRNA-(uracil-5-)-methyltransferase TrmFO (434 aa).

9–14 lines the FAD pocket; that stretch reads GAGLAG.

It belongs to the MnmG family. TrmFO subfamily. Requires FAD as cofactor.

The protein resides in the cytoplasm. The enzyme catalyses uridine(54) in tRNA + (6R)-5,10-methylene-5,6,7,8-tetrahydrofolate + NADH + H(+) = 5-methyluridine(54) in tRNA + (6S)-5,6,7,8-tetrahydrofolate + NAD(+). The catalysed reaction is uridine(54) in tRNA + (6R)-5,10-methylene-5,6,7,8-tetrahydrofolate + NADPH + H(+) = 5-methyluridine(54) in tRNA + (6S)-5,6,7,8-tetrahydrofolate + NADP(+). Its function is as follows. Catalyzes the folate-dependent formation of 5-methyl-uridine at position 54 (M-5-U54) in all tRNAs. The chain is Methylenetetrahydrofolate--tRNA-(uracil-5-)-methyltransferase TrmFO from Fusobacterium nucleatum subsp. nucleatum (strain ATCC 25586 / DSM 15643 / BCRC 10681 / CIP 101130 / JCM 8532 / KCTC 2640 / LMG 13131 / VPI 4355).